The primary structure comprises 146 residues: Ecotin-like protein 1 (146 aa).

The protein belongs to the protease inhibitor I11 (ecotin) family.

The polypeptide is Ecotin-like protein 1 (ISP1) (Leishmania major).